Here is an 899-residue protein sequence, read N- to C-terminus: MKTDFKFSNLLGTVYCQGNLLFSPDGTHLFSPVGNRVTVFNLVDNKSYTLPFSHRKNIARIGLTPQGNLLLSIDEDGQAILTNVPRRVVLYHFSFKAPVTALSFSPSGRHFIVGLGRKIEVWHVPSTPDANADGELEFAPFVKHHTHVQHFDDVRHIEWSHDSRFFLTSSKDLTARIWSVDQEEGFTPTVLSGHRQGVVGAWFSKDQETIYTVSKDGAVFDWQYVAKPGQDEDMVDDDDLAWRIVNKHYFMQNSATVRCAAFHPESNLLVAGFSNGIFGLYEMPDFNMIHTLSISQNEIDFVTINKSGEWLAFGASKLGQLLVWEWQSESYILKQQGHFDSMNSLVYSPDGQRIVTVADDGKIKVWDTESGFCIVTFTEHTSGITACEFSKKGNVLFTSSLDGSIRAWDLIRYRNFRTFTAPERLSFSCMAVDPSGEIVAAGSVDSFDIHIWSVQTGQLLDRLSGHEGPVSSLAFAPNGGLLVSGSWDRTARIWSIFNRTQTSEPLQLNSDVLDIAFRPDSLQIAISTLDGNLSFWSVSEAEQQAGLDGRRDVSGGRKIGDRRTAANVAGTKAFNTIRYSTDGSCLLAGGNSKYICLYSVTTMVLLKKYTVSVNLSIQGTQEFLNSKLLTEAGPQGLLDEQGEASDFEDRIDRSLPGSKRGDPSARRKNPEVRVNGVAFSPNGSAFCAASTEGLLIYSLDTTIQFDPFDLNMEITPTSTLAVLEKEKDYLKALVMAFRLNEAGLIQRVFQAIPYTDIPLVVEQFPNVYVARLLRYVAAQTEQSPHVEFCLLWIKALVDKHGAWLSANRGKVDVELRVVARAVSKMRDEIRKLADENVYMVDYLLGQASAAKETNTTKTLALEWATTGSDEQPGAGGMSLNDVMQQDEGNASEDEWIGLV.

WD repeat units lie at residues asparagine 9 to phenylalanine 52, serine 53 to histidine 92, serine 94 to alanine 132, glutamine 149 to proline 188, glycine 193 to glutamate 232, glutamine 252 to threonine 291, isoleucine 294 to lysine 334, glycine 337 to threonine 376, glutamate 379 to threonine 418, proline 422 to serine 464, glycine 465 to glutamate 504, glutamine 507 to glycine 546, and alanine 569 to lysine 608. The tract at residues aspartate 639–lysine 668 is disordered. Positions phenylalanine 647–lysine 668 are enriched in basic and acidic residues. The WD 14 repeat unit spans residues asparagine 669–aspartate 709. Residues threonine 866–valine 899 are disordered. Residues asparagine 889–valine 899 show a composition bias toward acidic residues.

Belongs to the WD repeat PWP2 family.

The chain is Periodic tryptophan protein 2 homolog from Neurospora crassa (strain ATCC 24698 / 74-OR23-1A / CBS 708.71 / DSM 1257 / FGSC 987).